Reading from the N-terminus, the 511-residue chain is MVLLAAAVCTKAGKAIVSRQFVEMTRTRIEGLLAAFPKLMNTGKQHTFVETESVRYVYQPMEKLYMVLITTKNSNILEDLETLRLFSRVIPEYCRALEENEISEHCFDLIFAFDEIVALGYRENVNLAQIRTFTEMDSHEEKVFRAVRETQEREAKAEMRRKAKELQQARRDAERQGKKAPGFGGFGSSAVSGGSTAAMITETIIETDKPKVAPAPARPSGPSKALKLGAKGKEVDNFVDKLKSEGETIMSSSMGKRTSEATKMHAPPINMESVHMKIEEKITLTCGRDGGLQNMELHGMIMLRISDDKYGRIRLHVENEDKKGVQLQTHPNVDKKLFTAESLIGLKNPEKSFPVNSDVGVLKWRLQTTEESFIPLTINCWPSESGNGCDVNIEYELQEDNLELNDVVITIPLPSGVGAPVIGEIDGEYRHDSRRNTLEWCLPVIDAKNKSGSLEFSIAGQPNDFFPVQVSFVSKKNYCNIQVTKVTQVDGNSPVRFSTETTFLVDKYEIL.

The span at 168–177 shows a compositional bias: basic and acidic residues; sequence QARRDAERQG. Residues 168 to 188 are disordered; that stretch reads QARRDAERQGKKAPGFGGFGS. Ser-223 is modified (phosphoserine). Residues Lys-233 and Lys-241 each carry the N6-acetyllysine modification. Position 244 is a phosphoserine (Ser-244). The 241-residue stretch at 271 to 511 folds into the MHD domain; the sequence is MESVHMKIEE…TFLVDKYEIL (241 aa). 2 positions are modified to N6-acetyllysine: Lys-309 and Lys-351. Position 493 is a phosphoserine (Ser-493).

The protein belongs to the adaptor complexes medium subunit family. Delta-COP subfamily. In terms of assembly, oligomeric complex that consists of at least the alpha, beta, beta', gamma, delta, epsilon and zeta subunits. In terms of tissue distribution, ubiquitously expressed.

It localises to the cytoplasm. The protein localises to the golgi apparatus membrane. Its subcellular location is the cytoplasmic vesicle. It is found in the COPI-coated vesicle membrane. In terms of biological role, component of the coatomer, a cytosolic protein complex that binds to dilysine motifs and reversibly associates with Golgi non-clathrin-coated vesicles, which further mediate biosynthetic protein transport from the ER, via the Golgi up to the trans Golgi network. The coatomer complex is required for budding from Golgi membranes, and is essential for the retrograde Golgi-to-ER transport of dilysine-tagged proteins. In mammals, the coatomer can only be recruited by membranes associated to ADP-ribosylation factors (ARFs), which are small GTP-binding proteins; the complex also influences the Golgi structural integrity, as well as the processing, activity, and endocytic recycling of LDL receptors. This Homo sapiens (Human) protein is Coatomer subunit delta (ARCN1).